A 704-amino-acid polypeptide reads, in one-letter code: Elongation factor G (704 aa).

In terms of domain architecture, tr-type G spans Ala-8–Val-290. GTP contacts are provided by residues Ala-17–Thr-24, Asp-88–His-92, and Asn-142–Asp-145.

It belongs to the TRAFAC class translation factor GTPase superfamily. Classic translation factor GTPase family. EF-G/EF-2 subfamily.

The protein resides in the cytoplasm. Catalyzes the GTP-dependent ribosomal translocation step during translation elongation. During this step, the ribosome changes from the pre-translocational (PRE) to the post-translocational (POST) state as the newly formed A-site-bound peptidyl-tRNA and P-site-bound deacylated tRNA move to the P and E sites, respectively. Catalyzes the coordinated movement of the two tRNA molecules, the mRNA and conformational changes in the ribosome. The protein is Elongation factor G of Salmonella agona (strain SL483).